The sequence spans 179 residues: Monothiol glutaredoxin-S12, chloroplastic (179 aa).

The transit peptide at 1 to 61 directs the protein to the chloroplast; the sequence is MVAATVNLAN…WPPLRCSSVK (61 aa). Residue Ala-62 is modified to N-acetylalanine. The Glutaredoxin domain occupies 75 to 176; it reads EETVKTTVAE…AILAEANGKN (102 aa). Cys-95 provides a ligand contact to [2Fe-2S] cluster.

It belongs to the glutaredoxin family. CPYC subfamily.

The protein localises to the plastid. It is found in the chloroplast. Its function is as follows. May only reduce GSH-thiol disulfides, but not protein disulfides. This chain is Monothiol glutaredoxin-S12, chloroplastic (GRXS12), found in Arabidopsis thaliana (Mouse-ear cress).